Consider the following 671-residue polypeptide: Gametogenetin-binding protein 2-like (671 aa).

2 disordered regions span residues 372–489 (REQK…ARVQ) and 532–562 (VRDSGYGSDPPSHAGSRTSSAISSPEGSEVS). Positions 373-384 (EQKKLKKKKKKD) are enriched in basic residues. Positions 385–395 (EKKNLLHRQCD) are enriched in basic and acidic residues. Residues 396-420 (DTEANESDEEEEELRNEELDLEEES) are compositionally biased toward acidic residues. Residues 455–472 (TKSKPKKQSKKKKQKKAA) show a composition bias toward basic residues. Polar residues-rich tracts occupy residues 476–486 (MGNQKQMQATA) and 546–557 (GSRTSSAISSPE).

This is Gametogenetin-binding protein 2-like from Drosophila melanogaster (Fruit fly).